A 347-amino-acid chain; its full sequence is Bombesin receptor-activated protein C6orf89 homolog (347 aa).

Topologically, residues 1 to 58 are cytoplasmic; it reads MDLAANEISIYDKLSETVDLVRQTGHQCGMSEKAIEKFIRQLLEKNEPQRPPPQYPLL. The helical transmembrane segment at 59–79 threads the bilayer; sequence IVVYKVLATLGLILLTAYFVI. The Extracellular segment spans residues 80-347; that stretch reads QPFSPLAPEP…ICDGTAFSEL (268 aa).

In terms of assembly, homodimer. Interacts with BRS3. Interacts (via N-terminus) with SIN3B. Glycosylated.

It is found in the golgi apparatus membrane. It localises to the cytoplasm. In terms of biological role, exhibits histone deacetylase (HDAC) enhancer properties. May play a role in cell cycle progression and wound repair of bronchial epithelial cells. The polypeptide is Bombesin receptor-activated protein C6orf89 homolog (Pongo abelii (Sumatran orangutan)).